We begin with the raw amino-acid sequence, 162 residues long: tRNA (cytidine(34)-2'-O)-methyltransferase (162 aa).

Leucine 80, glycine 102, leucine 124, and serine 132 together coordinate S-adenosyl-L-methionine.

The protein belongs to the class IV-like SAM-binding methyltransferase superfamily. RNA methyltransferase TrmH family. TrmL subfamily. In terms of assembly, homodimer.

The protein resides in the cytoplasm. The catalysed reaction is cytidine(34) in tRNA + S-adenosyl-L-methionine = 2'-O-methylcytidine(34) in tRNA + S-adenosyl-L-homocysteine + H(+). It catalyses the reaction 5-carboxymethylaminomethyluridine(34) in tRNA(Leu) + S-adenosyl-L-methionine = 5-carboxymethylaminomethyl-2'-O-methyluridine(34) in tRNA(Leu) + S-adenosyl-L-homocysteine + H(+). Methylates the ribose at the nucleotide 34 wobble position in the two leucyl isoacceptors tRNA(Leu)(CmAA) and tRNA(Leu)(cmnm5UmAA). Catalyzes the methyl transfer from S-adenosyl-L-methionine to the 2'-OH of the wobble nucleotide. The polypeptide is tRNA (cytidine(34)-2'-O)-methyltransferase (Acidovorax sp. (strain JS42)).